We begin with the raw amino-acid sequence, 803 residues long: Pesticidal crystal protein Cry13Aa (803 aa).

It belongs to the delta endotoxin family.

Endotoxin with nematicidal activity. This Bacillus thuringiensis protein is Pesticidal crystal protein Cry13Aa (cry13Aa).